The following is a 189-amino-acid chain: dCTP deaminase (189 aa).

Residues 112–117 (KSTYAR), 136–138 (TLE), Q157, Y171, and Q181 contribute to the dCTP site. Catalysis depends on E138, which acts as the Proton donor/acceptor.

The protein belongs to the dCTP deaminase family. As to quaternary structure, homotrimer.

The enzyme catalyses dCTP + H2O + H(+) = dUTP + NH4(+). The protein operates within pyrimidine metabolism; dUMP biosynthesis; dUMP from dCTP (dUTP route): step 1/2. Its function is as follows. Catalyzes the deamination of dCTP to dUTP. This is dCTP deaminase from Xanthomonas oryzae pv. oryzae (strain MAFF 311018).